The chain runs to 1059 residues: MLYRVSGFYKRHTRNFTNIDYGYYIRNFIHHIASKIYPYAKVVLPNFRAAHYFYILTLVILGSILVYPVKTCAYIDVLFFTAGASTQAGLNTVNVNDLSLYQQIVLYLLATLATPIFIHGSLLFVRLYYFERHFDNIKERSLMDYRMRKSATLARLGSAPTMSSTRLNTFNNQVLGFQEREAEKGSSSSPQSSSSQTSQPVSTAYNDQGGNDIEHHSEPSDSDDDESGNGPVTFQEKIHFEEPQRPRSQRRHSRTDSGIKFSALPHPRRRKSIDPEDMYRSINMLQEHKKNQEAKSKGIQFLNIGSPVRRKSRSSNIEAFPEEDTNPSRDDEITPATNSVGTGNNDEDEDDILIIKPPIEIENSDGANPIFTKKKKLASQIQFKETPGKAKKWITTKKRKHYNPWTSKLKKTLSNSSKKGSLSVVPTDTEDDSEDEEYASIDSETSDISDNEHAADNAEGSDVDSVGSYEEDEDEDEHNSDDDDDDDDGEGERRLGNGASLTKAQSHLVLPSKDETGGKKYTKRSNTLDTPQQNTSDGRKIRKKAPKRKTPRTQRNASFNQHSNVSIGDGSIENVDTNDSYQRLSRTMSGNYLSWTPTVGRNSTFIKLTDEQKEELGGIEYRAVKLLIKIIVVYYVGFNIIPGVMLSIWIYCMPHYKNLMISSSISPAWWAFFTSQSSFNDLGLTLTSNSMMSFNQNAFVQILCSFLIVIGNTGFPILLRFIIWVMFKTARPLSLYKESLGFLLDHPRRCFTLLFPSVPTWWLFFILVVLNGFDLVIFCILDLHDDTFKGVDMGYRVLNGLFQAFCTRTVGFSVMDLSQLHAATQVSYLIMMYISVLPIAISVRRTNVYEEQSLGVYAKENAEGVDESAPSNYVGSHLRNQLSYDLWYICLGLFIICIAEGKRLKEQDLRFSIFAVLFEIVSAYGTVGMSMGYPGVDCSLSGEFNVISKLVIIAMMIRGRHRGLPYTIDRAIMLPNAAMKRHDRLQEEHAINRHNTMERTTTLGRVATFGNGPIDGGNNLLTRAITNIEHRLRNRRDGRSESSTVSEDPRYVVRTVSEV.

Topologically, residues M1–N46 are cytoplasmic. The chain crosses the membrane as a helical span at residues F47–Y67. The Extracellular portion of the chain corresponds to P68–A73. An intramembrane segment occupies Y74–L90. Residues N91–S99 lie on the Extracellular side of the membrane. Residues L100–L122 traverse the membrane as a helical segment. The Cytoplasmic portion of the chain corresponds to L123–K625. 3 disordered regions span residues R180 to E276, I304 to D350, and P404 to N574. Residues S186 to T203 are compositionally biased toward low complexity. Residues E236–R245 are compositionally biased toward basic and acidic residues. A compositionally biased stretch (polar residues) spans P335–N344. Low complexity predominate over residues T412–S423. 2 stretches are compositionally biased toward acidic residues: residues D428–S449 and Y469–E490. Residues R524–S536 show a composition bias toward polar residues. Basic residues predominate over residues K540 to R552. A compositionally biased stretch (polar residues) spans N556–S566. Residues L626–W649 form a helical membrane-spanning segment. Residues I650 to A668 are Extracellular-facing. Residues W669–T685 lie within the membrane without spanning it. At L686–Q696 the chain is on the extracellular side. Residues N697–T713 traverse the membrane as a helical segment. The Cytoplasmic segment spans residues G714–S757. A helical transmembrane segment spans residues V758–L781. The Extracellular portion of the chain corresponds to D782–R796. An intramembrane segment occupies V797 to S813. Residues V814–L820 lie on the Extracellular side of the membrane. The helical transmembrane segment at H821–R844 threads the bilayer. Topologically, residues R845–H877 are cytoplasmic. A helical membrane pass occupies residues L878–A899. At E900–S912 the chain is on the extracellular side. An intramembrane segment occupies I913–M931. Over G932 to N945 the chain is Extracellular. The chain crosses the membrane as a helical span at residues V946–I968. Residues D969 to V1059 lie on the Cytoplasmic side of the membrane.

The protein belongs to the TrkH potassium transport family.

The protein localises to the cell membrane. The enzyme catalyses K(+)(in) = K(+)(out). It carries out the reaction chloride(in) = chloride(out). Its activity is regulated as follows. TRK1-mediated chloride conductance is blocked by 4,4'-diisothiocyanatostilbene-2,2'-disulfonic acid. Potassium transporter that mediates K(+) influx, as well as Cl(-) efflux as a secondary function. TRK1 is the major K(+) uptake transporter that regulates membrane potential and intracellular pH. The TRK1-mediated Cl(-) efflux should serve as a Cl(-) detoxification route and may play a role in sustaining C.albicans on mammalian epithelial surfaces, or in physiological saline solutions such as saliva. Functionally, mediates candidacidal activities of cysteine-free peptides, but not of defensins. The hallmark of salivary gland-secreted histatin-5 (Hst 5) killing of C.albicans is the rapid efflux of cellular ATP and other small nucleotides and ions from the cell as well as concurrent intracellular uptake of propidium iodide (PI). TRK1 is the channel for Hst 5-induced killing and histatin-5 may directly or indirectly alter TRK1 function, allowing the efflux of larger anions, including ATP, and the influx of small cationic dyes, such as PI. The polypeptide is Potassium transporter TRK1 (Candida albicans (Yeast)).